We begin with the raw amino-acid sequence, 345 residues long: tRNA-dihydrouridine(20/20a) synthase (345 aa).

FMN is bound by residues 32-34 (PML) and Q84. The active-site Proton donor is C114. FMN-binding positions include K153, H186, 226 to 228 (NGG), and 248 to 249 (GR).

Belongs to the Dus family. DusA subfamily. FMN is required as a cofactor.

It catalyses the reaction 5,6-dihydrouridine(20) in tRNA + NADP(+) = uridine(20) in tRNA + NADPH + H(+). The catalysed reaction is 5,6-dihydrouridine(20) in tRNA + NAD(+) = uridine(20) in tRNA + NADH + H(+). The enzyme catalyses 5,6-dihydrouridine(20a) in tRNA + NADP(+) = uridine(20a) in tRNA + NADPH + H(+). It carries out the reaction 5,6-dihydrouridine(20a) in tRNA + NAD(+) = uridine(20a) in tRNA + NADH + H(+). In terms of biological role, catalyzes the synthesis of 5,6-dihydrouridine (D), a modified base found in the D-loop of most tRNAs, via the reduction of the C5-C6 double bond in target uridines. Specifically modifies U20 and U20a in tRNAs. This chain is tRNA-dihydrouridine(20/20a) synthase, found in Escherichia coli O157:H7.